A 452-amino-acid polypeptide reads, in one-letter code: MKVLILAAGLGKRMKSKYPKVVHKILGKPMINWVVDLGKAFGEVGVVVGHKADIVKSYLPEDVKTYLQEPQLGTGHAVMCARDFISENEDLLVLYGDVPLLSKETINKLKKEHEEQKNQVTVLTFVTDNPAGYGRIIRENGKVRIVEDKDATEEEKKIKEVNSGIYIFSGKFVLENLDKLSNNNAQGEYYLTDLVGMAERSSTVILEDIVEVSGVNDRIQLAQLETIAKQRILEKLMLSGVTIVDPNSTFIGPDVEIGMDTIIYPFTIIEGYTKIGEDCEVGPYSHIVDSNIGNEVKVIRSEVEKSVIENKVSVGPFSRLREGTVLKEKVKIGNFVETKKTTVGKNSKAQHLTYLGDATIGEDVNVGAGTITCNYDGYKKYPTYIGDGAFIGSNSSLVAPVNIGKGAITGAGSVITEDVPNDALALGRARQIIKEGWAKKKREELKNADHKE.

Positions 1–218 (MKVLILAAGL…IVEVSGVNDR (218 aa)) are pyrophosphorylase. Residues 6 to 9 (LAAG), Lys-20, Gln-68, 73 to 74 (GT), 95 to 97 (YGD), Gly-134, Glu-147, Asn-162, and Asn-216 each bind UDP-N-acetyl-alpha-D-glucosamine. Residue Asp-97 coordinates Mg(2+). Asn-216 contributes to the Mg(2+) binding site. A linker region spans residues 219 to 239 (IQLAQLETIAKQRILEKLMLS). Positions 240 to 452 (GVTIVDPNST…EELKNADHKE (213 aa)) are N-acetyltransferase. Arg-321 and Lys-339 together coordinate UDP-N-acetyl-alpha-D-glucosamine. His-351 functions as the Proton acceptor in the catalytic mechanism. UDP-N-acetyl-alpha-D-glucosamine-binding residues include Tyr-354 and Asn-365. Residues Ala-368, 374 to 375 (NY), Ser-393, Ala-411, and Arg-428 contribute to the acetyl-CoA site.

This sequence in the N-terminal section; belongs to the N-acetylglucosamine-1-phosphate uridyltransferase family. The protein in the C-terminal section; belongs to the transferase hexapeptide repeat family. As to quaternary structure, homotrimer. It depends on Mg(2+) as a cofactor.

Its subcellular location is the cytoplasm. The catalysed reaction is alpha-D-glucosamine 1-phosphate + acetyl-CoA = N-acetyl-alpha-D-glucosamine 1-phosphate + CoA + H(+). The enzyme catalyses N-acetyl-alpha-D-glucosamine 1-phosphate + UTP + H(+) = UDP-N-acetyl-alpha-D-glucosamine + diphosphate. Its pathway is nucleotide-sugar biosynthesis; UDP-N-acetyl-alpha-D-glucosamine biosynthesis; N-acetyl-alpha-D-glucosamine 1-phosphate from alpha-D-glucosamine 6-phosphate (route II): step 2/2. It functions in the pathway nucleotide-sugar biosynthesis; UDP-N-acetyl-alpha-D-glucosamine biosynthesis; UDP-N-acetyl-alpha-D-glucosamine from N-acetyl-alpha-D-glucosamine 1-phosphate: step 1/1. It participates in bacterial outer membrane biogenesis; LPS lipid A biosynthesis. Its function is as follows. Catalyzes the last two sequential reactions in the de novo biosynthetic pathway for UDP-N-acetylglucosamine (UDP-GlcNAc). The C-terminal domain catalyzes the transfer of acetyl group from acetyl coenzyme A to glucosamine-1-phosphate (GlcN-1-P) to produce N-acetylglucosamine-1-phosphate (GlcNAc-1-P), which is converted into UDP-GlcNAc by the transfer of uridine 5-monophosphate (from uridine 5-triphosphate), a reaction catalyzed by the N-terminal domain. The sequence is that of Bifunctional protein GlmU from Fervidobacterium nodosum (strain ATCC 35602 / DSM 5306 / Rt17-B1).